Reading from the N-terminus, the 568-residue chain is DNA ligase 2 (568 aa).

An ATP-binding site is contributed by Glu-254. Lys-256 (N6-AMP-lysine intermediate) is an active-site residue. ATP-binding residues include Arg-261, Arg-276, Glu-306, Phe-346, Arg-425, and Lys-431.

This sequence belongs to the ATP-dependent DNA ligase family. Requires Mg(2+) as cofactor.

It catalyses the reaction ATP + (deoxyribonucleotide)n-3'-hydroxyl + 5'-phospho-(deoxyribonucleotide)m = (deoxyribonucleotide)n+m + AMP + diphosphate.. DNA ligase that seals nicks in double-stranded DNA during DNA replication, DNA recombination and DNA repair. This Methanosarcina mazei (strain ATCC BAA-159 / DSM 3647 / Goe1 / Go1 / JCM 11833 / OCM 88) (Methanosarcina frisia) protein is DNA ligase 2.